Reading from the N-terminus, the 530-residue chain is Apolipoprotein N-acyltransferase (530 aa).

Helical transmembrane passes span L19–L39, W65–V85, F96–Y116, L128–F148, L169–W189, and A197–L217. Residues V232–G485 enclose the CN hydrolase domain. Catalysis depends on E274, which acts as the Proton acceptor. Residue K343 is part of the active site. The Nucleophile role is filled by C396.

Belongs to the CN hydrolase family. Apolipoprotein N-acyltransferase subfamily.

The protein localises to the cell inner membrane. It carries out the reaction N-terminal S-1,2-diacyl-sn-glyceryl-L-cysteinyl-[lipoprotein] + a glycerophospholipid = N-acyl-S-1,2-diacyl-sn-glyceryl-L-cysteinyl-[lipoprotein] + a 2-acyl-sn-glycero-3-phospholipid + H(+). It participates in protein modification; lipoprotein biosynthesis (N-acyl transfer). Catalyzes the phospholipid dependent N-acylation of the N-terminal cysteine of apolipoprotein, the last step in lipoprotein maturation. The sequence is that of Apolipoprotein N-acyltransferase from Caulobacter vibrioides (strain ATCC 19089 / CIP 103742 / CB 15) (Caulobacter crescentus).